Consider the following 204-residue polypeptide: uncharacterized protein (204 aa).

Its function is as follows. Possibly involved in pGI2 replication mechanism. This is an uncharacterized protein from Bacillus thuringiensis.